Here is a 241-residue protein sequence, read N- to C-terminus: Large ribosomal subunit protein uL2 (241 aa).

The disordered stretch occupies residues 200-241; the sequence is AVDHPHGGGNRQHPGRPTTISRHAPAGRKVGSIAAKRTGKRR.

This sequence belongs to the universal ribosomal protein uL2 family. Part of the 50S ribosomal subunit. Forms a bridge to the 30S subunit in the 70S ribosome.

In terms of biological role, one of the primary rRNA binding proteins. Required for association of the 30S and 50S subunits to form the 70S ribosome, for tRNA binding and peptide bond formation. It has been suggested to have peptidyltransferase activity; this is somewhat controversial. Makes several contacts with the 16S rRNA in the 70S ribosome. This Methanosphaera stadtmanae (strain ATCC 43021 / DSM 3091 / JCM 11832 / MCB-3) protein is Large ribosomal subunit protein uL2.